Reading from the N-terminus, the 367-residue chain is MSLADKVLAVNNDLPIRSTQPVHSGKVRSVYWLTESDSRRLIAEKGYNVAADAPLAIMVISDRISAFDCIWHAEGGMNGVPGKGAALNAISNHWFKLFKDQGLADSHILDIPHPLVWIVQKARPVMIEAICRQYITGSMWRAYEKGEREFCGIEIADGLKKDQKLPELLTTPSTKGILEGIPGVAAVDDVNITRQNIEDNFAAFNFTTTQDIALYEKLLKEGFNVISHELAKIGQIFVDTKFEFGYVKDKAGNEKLIYMDEVGTPDSSRIWDAAEYQKGNIVENSKEDFRQLLLNHFPDPDILLNKDRMAERSDLAKNNALPAAVLMKISATYISIAEKIIGHKITLSDNPKAEIIEILDRQYGLID.

The protein belongs to the SAICAR synthetase family.

It carries out the reaction 5-amino-1-(5-phospho-D-ribosyl)imidazole-4-carboxylate + L-aspartate + ATP = (2S)-2-[5-amino-1-(5-phospho-beta-D-ribosyl)imidazole-4-carboxamido]succinate + ADP + phosphate + 2 H(+). Its pathway is purine metabolism; IMP biosynthesis via de novo pathway; 5-amino-1-(5-phospho-D-ribosyl)imidazole-4-carboxamide from 5-amino-1-(5-phospho-D-ribosyl)imidazole-4-carboxylate: step 1/2. This is Phosphoribosylaminoimidazole-succinocarboxamide synthase from Psychromonas ingrahamii (strain DSM 17664 / CCUG 51855 / 37).